We begin with the raw amino-acid sequence, 331 residues long: Cytochrome bo(3) ubiquinol oxidase subunit 2 (331 aa).

Residues 1-23 form the signal peptide; sequence MTKANPFAALKWLSLAPALLLGG. The N-palmitoyl cysteine moiety is linked to residue C24. Residue C24 is the site of S-diacylglycerol cysteine attachment. The Periplasmic segment spans residues 24 to 41; that stretch reads CDMTLFNPKGQVGMDERT. The chain crosses the membrane as a helical span at residues 42–62; sequence LIITATLLMLIVVIPVIVMTL. The Cytoplasmic portion of the chain corresponds to 63 to 86; that stretch reads AFAWKYRASNTQAEYKPDWHHSNR. Residues 87-107 traverse the membrane as a helical segment; it reads IEAVVWLVPCVIIAILGWITW. Residues 108–331 are Periplasmic-facing; the sequence is ESTHKLDPYR…DMHMQPSTQE (224 aa).

The protein belongs to the cytochrome c oxidase subunit 2 family. As to quaternary structure, heterooctamer of two A chains, two B chains, two C chains and two D chains.

It localises to the cell inner membrane. Cytochrome bo(3) ubiquinol terminal oxidase is the component of the aerobic respiratory chain of E.coli that predominates when cells are grown at high aeration. Has proton pump activity across the membrane in addition to electron transfer, pumping 2 protons/electron. In Pseudomonas aeruginosa (strain ATCC 15692 / DSM 22644 / CIP 104116 / JCM 14847 / LMG 12228 / 1C / PRS 101 / PAO1), this protein is Cytochrome bo(3) ubiquinol oxidase subunit 2 (cyoA).